Reading from the N-terminus, the 475-residue chain is Exodeoxyribonuclease 7 large subunit (475 aa).

It belongs to the XseA family. As to quaternary structure, heterooligomer composed of large and small subunits.

It localises to the cytoplasm. It catalyses the reaction Exonucleolytic cleavage in either 5'- to 3'- or 3'- to 5'-direction to yield nucleoside 5'-phosphates.. Functionally, bidirectionally degrades single-stranded DNA into large acid-insoluble oligonucleotides, which are then degraded further into small acid-soluble oligonucleotides. This chain is Exodeoxyribonuclease 7 large subunit, found in Bartonella henselae (strain ATCC 49882 / DSM 28221 / CCUG 30454 / Houston 1) (Rochalimaea henselae).